Here is a 394-residue protein sequence, read N- to C-terminus: Elongation factor Tu (394 aa).

The 195-residue stretch at 10-204 (KPHINVGTIG…SLDKYIPIPV (195 aa)) folds into the tr-type G domain. A G1 region spans residues 19–26 (GHVDHGKT). Position 19–26 (19–26 (GHVDHGKT)) interacts with GTP. Threonine 26 contacts Mg(2+). The interval 60–64 (GITIN) is G2. The segment at 81-84 (DCPG) is G3. Residues 81-85 (DCPGH) and 136-139 (NKCD) contribute to the GTP site. A G4 region spans residues 136–139 (NKCD). Residues 174-176 (SAL) are G5.

It belongs to the TRAFAC class translation factor GTPase superfamily. Classic translation factor GTPase family. EF-Tu/EF-1A subfamily. In terms of assembly, monomer.

The protein resides in the cytoplasm. The enzyme catalyses GTP + H2O = GDP + phosphate + H(+). Its function is as follows. GTP hydrolase that promotes the GTP-dependent binding of aminoacyl-tRNA to the A-site of ribosomes during protein biosynthesis. The polypeptide is Elongation factor Tu (Buchnera aphidicola subsp. Cinara cedri (strain Cc)).